The chain runs to 170 residues: Cysteine-rich venom protein VAR4 (170 aa).

An N-terminal signal peptide occupies residues 1 to 22 (MILLKLYLTLAAILCQSRGTTS). One can recognise an SCP domain in the interval 41 to 169 (NKHNDLRRTV…PLKYFLVCQY (129 aa)). Cystine bridges form between C77/C156, C95/C170, and C151/C167.

This sequence belongs to the CRISP family. In terms of processing, contains 8 disulfide bonds. In terms of tissue distribution, expressed by the venom gland.

Its subcellular location is the secreted. In terms of biological role, blocks ryanodine receptors, and potassium channels. This chain is Cysteine-rich venom protein VAR4, found in Varanus acanthurus (Ridge-tailed monitor).